We begin with the raw amino-acid sequence, 118 residues long: Peptidyl-prolyl cis-trans isomerase Pin1 (118 aa).

2 disordered regions span residues 1-37 and 61-84; these read MSSE…ATTR and LASR…GRGQ. One can recognise a PpiC domain in the interval 3–118; sequence SEKVRASHIL…SGVHIIKRTG (116 aa). Residues 12-22 are compositionally biased toward basic residues; that stretch reads LIKHQGSRRKS.

This sequence belongs to the PpiC/parvulin rotamase family. The N-terminus is blocked. As to expression, expressed in roots, stems, leaves, flowers and seedlings.

The protein localises to the cytoplasm. It localises to the nucleus. It carries out the reaction [protein]-peptidylproline (omega=180) = [protein]-peptidylproline (omega=0). Its activity is regulated as follows. Inhibited in vitro by juglone. In terms of biological role, prolyl cis/trans isomerase with specificity for phospho-Ser-Pro bonds. The sequence is that of Peptidyl-prolyl cis-trans isomerase Pin1 (PARV12.8) from Digitalis lanata (Grecian foxglove).